A 354-amino-acid chain; its full sequence is Histidinol-phosphate aminotransferase (354 aa).

N6-(pyridoxal phosphate)lysine is present on Lys222.

Belongs to the class-II pyridoxal-phosphate-dependent aminotransferase family. Histidinol-phosphate aminotransferase subfamily. In terms of assembly, homodimer. Pyridoxal 5'-phosphate serves as cofactor.

It catalyses the reaction L-histidinol phosphate + 2-oxoglutarate = 3-(imidazol-4-yl)-2-oxopropyl phosphate + L-glutamate. The protein operates within amino-acid biosynthesis; L-histidine biosynthesis; L-histidine from 5-phospho-alpha-D-ribose 1-diphosphate: step 7/9. The chain is Histidinol-phosphate aminotransferase from Leuconostoc citreum (strain KM20).